Consider the following 316-residue polypeptide: SWR complex protein 2 (316 aa).

Disordered regions lie at residues 1–81 (MSAT…GEEV), 93–127 (KRKI…KKKY), and 153–180 (ETRL…TMTQ). The segment covering 20–31 (KMRELLEKEHLR) has biased composition (basic and acidic residues). Residues 20-95 (KMRELLEKEH…RDEERIKKRK (76 aa)) are a coiled coil. The segment covering 40–56 (EKEDEEYNIEEEEEAER) has biased composition (acidic residues). A phosphoserine mark is found at S64 and S65. Residues 70–81 (ELKKLEEEGEEV) are compositionally biased toward basic and acidic residues. The segment covering 167–180 (VSASANRQKGTMTQ) has biased composition (polar residues).

Belongs to the VPS72/YL1 family. In terms of assembly, component of the SWR1 chromatin-remodeling complex.

It localises to the nucleus. In terms of biological role, participates in the catalytic exchange of histone H2A for the H2A variant pht1, an euchromatin-specific factor, leading to chromatin remodeling and changes in transcription of targeted genes. The polypeptide is SWR complex protein 2 (swc2) (Schizosaccharomyces pombe (strain 972 / ATCC 24843) (Fission yeast)).